Consider the following 352-residue polypeptide: Elongation factor Ts (352 aa).

The involved in Mg(2+) ion dislocation from EF-Tu stretch occupies residues 81 to 84 (TDFV).

This sequence belongs to the EF-Ts family.

Its subcellular location is the cytoplasm. Functionally, associates with the EF-Tu.GDP complex and induces the exchange of GDP to GTP. It remains bound to the aminoacyl-tRNA.EF-Tu.GTP complex up to the GTP hydrolysis stage on the ribosome. The chain is Elongation factor Ts from Campylobacter hominis (strain ATCC BAA-381 / DSM 21671 / CCUG 45161 / LMG 19568 / NCTC 13146 / CH001A).